Reading from the N-terminus, the 129-residue chain is Transmembrane protein 105 (129 aa).

The next 2 membrane-spanning stretches (helical) occupy residues 23–43 (AGNVIGQLIYLLTWSLFTAWL) and 94–114 (FLAGGLHLVPSSLSLAACGVV).

The protein resides in the membrane. This is Transmembrane protein 105 (TMEM105) from Homo sapiens (Human).